Reading from the N-terminus, the 833-residue chain is Disintegrin and metalloproteinase domain-containing protein 17 (833 aa).

An N-terminal signal peptide occupies residues 1 to 17 (MRQCALFLTSLVPIVLA). One can recognise a Peptidase M12B domain in the interval 223–474 (NTCKLLVVAD…KAQECFQERS (252 aa)). The interval 301–345 (AKSYPNEEKDAWDVKMLLEQFSFDIAEEASKVCLAHLFTYQDFDM) is interaction with classical swine fever virus envelope glycoprotein E2. Disulfide bonds link cysteine 365–cysteine 469, cysteine 423–cysteine 453, and cysteine 534–cysteine 555. Residue histidine 405 participates in Zn(2+) binding. Glutamate 406 is a catalytic residue. Residues histidine 409 and histidine 415 each coordinate Zn(2+). Residues 475-563 (NKVCGNSRVD…ECPPPGNAED (89 aa)) form the Disintegrin domain. Residues 672–692 (IVGSVLVFSLMLWIPVSILVH) traverse the membrane as a helical segment. 2 disordered regions span residues 735-760 (TPGRLQPLQPLQPGPVLPSAPSVPVA) and 772-833 (QEDP…ETEC). 3 stretches are compositionally biased toward basic and acidic residues: residues 777–790 (TDSHVDEDGFEKDP), 800–816 (SFEDLTDHPVTRSEKAS), and 824–833 (SRVDSKETEC).

In terms of assembly, (Microbial infection) Interacts (via metalloproteinase domain) with classical swine fever virus envelope glycoprotein E2; this interaction allows binding and probably entry of the virus into the cell. Interacts with MAD2L1, MAPK14 and MUC1. Interacts with iRhom1/RHBDF1 and iRhom2/RHBDF2. Interacts with FRMD8 via its interaction with iRhom1/RHBDF1 and iRhom2/RHBDF2. Zn(2+) is required as a cofactor. In terms of processing, the precursor is cleaved by a furin endopeptidase. Phosphorylated.

It is found in the membrane. It catalyses the reaction Narrow endopeptidase specificity. Cleaves Pro-Leu-Ala-Gln-Ala-|-Val-Arg-Ser-Ser-Ser in the membrane-bound, 26-kDa form of tumor necrosis factor alpha (TNFalpha). Similarly cleaves other membrane-anchored, cell-surface proteins to 'shed' the extracellular domains.. In terms of biological role, transmembrane metalloprotease which mediates the ectodomain shedding of a myriad of transmembrane proteins including adhesion proteins, growth factor precursors and cytokines important for inflammation and immunity. Cleaves the membrane-bound precursor of TNF-alpha to its mature soluble form. Responsible for the proteolytical release of soluble JAM3 from endothelial cells surface. Responsible for the proteolytic release of several other cell-surface proteins, including p75 TNF-receptor, interleukin 1 receptor type II, p55 TNF-receptor, transforming growth factor-alpha, L-selectin, growth hormone receptor, MUC1 and the amyloid precursor protein. Acts as an activator of Notch pathway by mediating cleavage of Notch, generating the membrane-associated intermediate fragment called Notch extracellular truncation (NEXT). Plays a role in the proteolytic processing of ACE2. Plays a role in hemostasis through shedding of GP1BA, the platelet glycoprotein Ib alpha chain. Mediates the proteolytic cleavage of LAG3, leading to release the secreted form of LAG3. Mediates the proteolytic cleavage of IL6R, leading to the release of secreted form of IL6R. Mediates the proteolytic cleavage and shedding of FCGR3A upon NK cell stimulation, a mechanism that allows for increased NK cell motility and detachment from opsonized target cells. Cleaves TREM2, resulting in shedding of the TREM2 ectodomain. (Microbial infection) Acts as a receptor for classical swine fever virus. In Sus scrofa (Pig), this protein is Disintegrin and metalloproteinase domain-containing protein 17 (ADAM17).